The chain runs to 798 residues: Penicillin-binding protein 1A (798 aa).

Topologically, residues 1 to 9 are cytoplasmic; it reads MIKKILTTC. The chain crosses the membrane as a helical; Signal-anchor for type II membrane protein span at residues 10–30; the sequence is FGLVFGFCVFGVGLVAIAILV. The Periplasmic segment spans residues 31 to 798; it reads TYPKLPSLDS…SKQQQLDSLF (768 aa). The interval 50–218 is transglycosylase; sequence LTIYSADGEV…SAYNPIVNPE (169 aa). Catalysis depends on glutamate 88, which acts as the Proton donor; for transglycosylase activity. Residues 378–700 are transpeptidase; it reads RRALGFAARA…GTIAVPVWVD (323 aa). Residue serine 461 is the Acyl-ester intermediate; for transpeptidase activity of the active site. The segment at 738 to 798 is disordered; that stretch reads GLTLDNSGIA…SKQQQLDSLF (61 aa). The span at 768–777 shows a compositional bias: basic and acidic residues; that stretch reads AADDEVRQDM. The span at 783 to 798 shows a compositional bias: polar residues; that stretch reads LPSNTGSKQQQLDSLF.

In the N-terminal section; belongs to the glycosyltransferase 51 family. This sequence in the C-terminal section; belongs to the transpeptidase family.

The protein resides in the cell inner membrane. The catalysed reaction is [GlcNAc-(1-&gt;4)-Mur2Ac(oyl-L-Ala-gamma-D-Glu-L-Lys-D-Ala-D-Ala)](n)-di-trans,octa-cis-undecaprenyl diphosphate + beta-D-GlcNAc-(1-&gt;4)-Mur2Ac(oyl-L-Ala-gamma-D-Glu-L-Lys-D-Ala-D-Ala)-di-trans,octa-cis-undecaprenyl diphosphate = [GlcNAc-(1-&gt;4)-Mur2Ac(oyl-L-Ala-gamma-D-Glu-L-Lys-D-Ala-D-Ala)](n+1)-di-trans,octa-cis-undecaprenyl diphosphate + di-trans,octa-cis-undecaprenyl diphosphate + H(+). The enzyme catalyses Preferential cleavage: (Ac)2-L-Lys-D-Ala-|-D-Ala. Also transpeptidation of peptidyl-alanyl moieties that are N-acyl substituents of D-alanine.. It functions in the pathway cell wall biogenesis; peptidoglycan biosynthesis. Its function is as follows. Cell wall formation. Synthesis of cross-linked peptidoglycan from the lipid intermediates. The enzyme has a penicillin-insensitive transglycosylase N-terminal domain (formation of linear glycan strands) and a penicillin-sensitive transpeptidase C-terminal domain (cross-linking of the peptide subunits). This Neisseria meningitidis serogroup A / serotype 4A (strain DSM 15465 / Z2491) protein is Penicillin-binding protein 1A (mrcA).